A 335-amino-acid chain; its full sequence is Glyceraldehyde-3-phosphate dehydrogenase 2 (335 aa).

NAD(+) contacts are provided by residues 13-14, Asp34, and Met79; that span reads RI. D-glyceraldehyde 3-phosphate contacts are provided by residues 151–153, Thr182, 211–212, and Arg234; these read SCT and TG. The active-site Nucleophile is the Cys152. Asn316 is an NAD(+) binding site.

Belongs to the glyceraldehyde-3-phosphate dehydrogenase family. In terms of assembly, homotetramer.

Its subcellular location is the cytoplasm. It carries out the reaction D-glyceraldehyde 3-phosphate + phosphate + NAD(+) = (2R)-3-phospho-glyceroyl phosphate + NADH + H(+). It participates in carbohydrate degradation; glycolysis; pyruvate from D-glyceraldehyde 3-phosphate: step 1/5. Functionally, glyceraldehyde-3-phosphate dehydrogenase is a key enzyme in glycolysis that catalyzes the first step of the pathway by converting D-glyceraldehyde 3-phosphate (G3P) into 3-phospho-D-glyceroyl phosphate. The protein is Glyceraldehyde-3-phosphate dehydrogenase 2 (gapdh-2) of Danio rerio (Zebrafish).